We begin with the raw amino-acid sequence, 55 residues long: Large ribosomal subunit protein bL33 (55 aa).

This sequence belongs to the bacterial ribosomal protein bL33 family.

The chain is Large ribosomal subunit protein bL33 from Edwardsiella ictaluri (strain 93-146).